A 1318-amino-acid polypeptide reads, in one-letter code: DNA-directed RNA polymerase subunit beta' (1318 aa).

Zn(2+) is bound by residues cysteine 60, cysteine 62, cysteine 75, and cysteine 78. The Mg(2+) site is built by aspartate 535, aspartate 537, and aspartate 539. Positions 890, 967, 974, and 977 each coordinate Zn(2+).

The protein belongs to the RNA polymerase beta' chain family. The RNAP catalytic core consists of 2 alpha, 1 beta, 1 beta' and 1 omega subunit. When a sigma factor is associated with the core the holoenzyme is formed, which can initiate transcription. It depends on Mg(2+) as a cofactor. Zn(2+) is required as a cofactor.

It catalyses the reaction RNA(n) + a ribonucleoside 5'-triphosphate = RNA(n+1) + diphosphate. Functionally, DNA-dependent RNA polymerase catalyzes the transcription of DNA into RNA using the four ribonucleoside triphosphates as substrates. The protein is DNA-directed RNA polymerase subunit beta' of Rhodococcus erythropolis (strain PR4 / NBRC 100887).